The sequence spans 1322 residues: Flocculation protein FLO9 (1322 aa).

The first 24 residues, M1–A24, serve as a signal peptide directing secretion. Residues G74–G249 enclose the PA14 domain. Residues N135, N187, N203, N257, N262, and N270 are each glycosylated (N-linked (GlcNAc...) asparagine). Residues N197–G240 are sugar recognition. A run of 13 repeats spans residues T278–I322, T323–I367, T368–M412, T413–M457, T458–M502, T503–M547, T548–I592, T593–I637, T638–M682, T683–M727, T728–S772, T773–T817, and T818–S862. Positions T278–S862 are 13 X 45 AA approximate tandem repeats, Thr-rich. N329 is a glycosylation site (N-linked (GlcNAc...) asparagine). Residues N419, N464, N509, N554, N599, N644, N689, and N734 are each glycosylated (N-linked (GlcNAc...) asparagine). Disordered stretches follow at residues L770–P799 and V816–Q843. Composition is skewed to low complexity over residues T773–T795 and T817–T840. N888 is a glycosylation site (N-linked (GlcNAc...) asparagine). 3 consecutive repeat copies span residues V892–L906, V907–P921, and V922–T936. The interval V892 to T936 is 3 X 15 AA approximate repeats, Ser-rich. The segment covering S950–S1001 has biased composition (low complexity). A disordered region spans residues S950 to E1018. Residues Q1002 to E1018 show a composition bias toward polar residues. A run of 3 repeats spans residues T1013–S1063, T1085–S1135, and T1136–T1186. Residues T1013–T1186 form a 3 X 51 AA approximate repeats, Thr-rich region. Residues T1186–M1196 are compositionally biased toward polar residues. Disordered stretches follow at residues T1186–T1221 and S1256–M1284. Over residues N1197 to T1221 the composition is skewed to low complexity. Polar residues predominate over residues E1257 to M1284. G1299 is lipidated: GPI-anchor amidated glycine. A propeptide spans S1300 to I1322 (removed in mature form).

This sequence belongs to the flocculin family. The GPI-anchor is attached to the protein in the endoplasmic reticulum and serves to target the protein to the cell surface. There, the glucosamine-inositol phospholipid moiety is cleaved off and the GPI-modified mannoprotein is covalently attached via its lipidless GPI glycan remnant to the 1,6-beta-glucan of the outer cell wall layer.

The protein resides in the secreted. Its subcellular location is the cell wall. It localises to the membrane. Functionally, cell wall protein that participates directly in adhesive cell-cell interactions during yeast flocculation, a reversible, asexual and Ca(2+)-dependent process in which cells adhere to form aggregates (flocs) consisting of thousands of cells. The lectin-like protein sticks out of the cell wall of flocculent cells and selectively binds mannose residues in the cell walls of adjacent cells. In Saccharomyces cerevisiae (strain ATCC 204508 / S288c) (Baker's yeast), this protein is Flocculation protein FLO9 (FLO9).